We begin with the raw amino-acid sequence, 765 residues long: Probable glycosyltransferase STELLO2 (765 aa).

Residues 1–43 (MLVQDRVAPKPPKSRIRELPSRDRFAEPKILDFSSWVSDNVYR) lie on the Cytoplasmic side of the membrane. The helical transmembrane segment at 44-64 (IVIIFLFIVTVAAFFFLYNTT) threads the bilayer. The Lumenal segment spans residues 65 to 765 (DTASLLCFQS…EGDPLLMELV (701 aa)). Asn235 and Asn723 each carry an N-linked (GlcNAc...) asparagine glycan.

The protein belongs to the STELLO family. As to quaternary structure, homo- and heterodimer with STL1. Interacts with CESA1, CESA3, CESA4, CESA6, CESA7 and CESA8, but not with GOT1. In terms of tissue distribution, expressed in cells that are expanding or producing secondary cell walls.

It is found in the golgi apparatus membrane. In terms of biological role, probable glycosyltransferase regulating the assembly and trafficking of cellulose synthase complexes. This is Probable glycosyltransferase STELLO2 from Arabidopsis thaliana (Mouse-ear cress).